A 160-amino-acid chain; its full sequence is Nascent polypeptide-associated complex subunit beta (160 aa).

2 disordered regions span residues 16 to 36 and 118 to 160; these read GGKG…GTDD and ESYQ…TEVE. The span at 20 to 30 shows a compositional bias: basic residues; that stretch reads TPRRKVKKVHK. The region spanning 33 to 98 is the NAC-A/B domain; that stretch reads GTDDKKLQTA…GEDKELTELV (66 aa). Over residues 124-134 the composition is skewed to basic and acidic residues; sequence QKEKGEDGDKK. Over residues 135–145 the composition is skewed to acidic residues; that stretch reads DDDDEDDDDIP.

It belongs to the NAC-beta family. Part of the nascent polypeptide-associated complex (NAC), consisting of EGD2 and EGD1. NAC associates with ribosomes via EGD1.

Its subcellular location is the cytoplasm. The protein resides in the nucleus. Its function is as follows. Component of the nascent polypeptide-associated complex (NAC), a dynamic component of the ribosomal exit tunnel, protecting the emerging polypeptides from interaction with other cytoplasmic proteins to ensure appropriate nascent protein targeting. The NAC complex also promotes mitochondrial protein import by enhancing productive ribosome interactions with the outer mitochondrial membrane and blocks the inappropriate interaction of ribosomes translating non-secretory nascent polypeptides with translocation sites in the membrane of the endoplasmic reticulum. EGD1 may act as a transcription factor that exert a negative effect on the expression of several genes that are transcribed by RNA polymerase II. The chain is Nascent polypeptide-associated complex subunit beta (EGD1) from Phaeosphaeria nodorum (strain SN15 / ATCC MYA-4574 / FGSC 10173) (Glume blotch fungus).